The primary structure comprises 295 residues: MDVDKLIEAGKIAKKVREEAVKLAKPGVSLLELAEKIEGRIIELGAKPAFPVNLSLNEIAAHYTPYKGDETTLKEGDYLKIDIGVHIDGYIADTAVTVRVGMEEDDLMEAAREALESAISVARAGVEIKELGRAIEDEIRKRGFNPIVNLSGHKIERYKLHAGISIPNIYRPHDNYKLREGDVFAIEPFATTGAGQVIEVPPTLIYMYVRDAPVRMVQARFLLAKIKREYKTLPFAYRWLQGEMPEGQLKLALRTLEKSGALYGYPVLREIRNGLVTQFEHTIIVEKDSVIVTTE.

Histidine 62 is a binding site for substrate. A divalent metal cation contacts are provided by aspartate 82, aspartate 93, and histidine 153. Histidine 161 is a substrate binding site. A divalent metal cation is bound by residues glutamate 187 and glutamate 280.

This sequence belongs to the peptidase M24A family. Methionine aminopeptidase archaeal type 2 subfamily. As to quaternary structure, monomer. Requires Co(2+) as cofactor. It depends on Zn(2+) as a cofactor. Mn(2+) serves as cofactor. Fe(2+) is required as a cofactor.

The enzyme catalyses Release of N-terminal amino acids, preferentially methionine, from peptides and arylamides.. In terms of biological role, removes the N-terminal methionine from nascent proteins. The N-terminal methionine is often cleaved when the second residue in the primary sequence is small and uncharged (Met-Ala-, Cys, Gly, Pro, Ser, Thr, or Val). In Pyrococcus abyssi (strain GE5 / Orsay), this protein is Methionine aminopeptidase.